Reading from the N-terminus, the 450-residue chain is Phosphoglucosamine mutase (450 aa).

S102 (phosphoserine intermediate) is an active-site residue. Residues S102, D243, D245, and D247 each coordinate Mg(2+). S102 is subject to Phosphoserine.

It belongs to the phosphohexose mutase family. Requires Mg(2+) as cofactor. Post-translationally, activated by phosphorylation.

The enzyme catalyses alpha-D-glucosamine 1-phosphate = D-glucosamine 6-phosphate. Its function is as follows. Catalyzes the conversion of glucosamine-6-phosphate to glucosamine-1-phosphate. In Allorhizobium ampelinum (strain ATCC BAA-846 / DSM 112012 / S4) (Agrobacterium vitis (strain S4)), this protein is Phosphoglucosamine mutase.